The chain runs to 254 residues: Thiazole synthase (254 aa).

The active-site Schiff-base intermediate with DXP is Lys96. Residues Gly157, 183–184, and 205–206 contribute to the 1-deoxy-D-xylulose 5-phosphate site; these read AG and NT.

The protein belongs to the ThiG family. In terms of assembly, homotetramer. Forms heterodimers with either ThiH or ThiS.

The protein localises to the cytoplasm. The catalysed reaction is [ThiS sulfur-carrier protein]-C-terminal-Gly-aminoethanethioate + 2-iminoacetate + 1-deoxy-D-xylulose 5-phosphate = [ThiS sulfur-carrier protein]-C-terminal Gly-Gly + 2-[(2R,5Z)-2-carboxy-4-methylthiazol-5(2H)-ylidene]ethyl phosphate + 2 H2O + H(+). It participates in cofactor biosynthesis; thiamine diphosphate biosynthesis. Catalyzes the rearrangement of 1-deoxy-D-xylulose 5-phosphate (DXP) to produce the thiazole phosphate moiety of thiamine. Sulfur is provided by the thiocarboxylate moiety of the carrier protein ThiS. In vitro, sulfur can be provided by H(2)S. The protein is Thiazole synthase of Clostridium perfringens (strain SM101 / Type A).